The primary structure comprises 348 residues: NADH-ubiquinone oxidoreductase chain 2 (348 aa).

A run of 9 helical transmembrane segments spans residues 3-23 (PYVLMILLSSLGLGTTLTFAS), 60-80 (FLTQATAAAMILFASTTNAWM), 96-116 (TMFMTALALKIGLAPMHFWMP), 149-169 (IDPLLLTLLGVTSTLVGGWGG), 178-197 (ILAYSSIAHMGWMIIVIQYA), 202-219 (LLALGTYIIMTSAAFLTL), 246-266 (LVLLSLGGLPPLTGFMPKWLI), 274-294 (DLPIIATTMALAALISLYFYL), and 326-346 (LALFTMATLGLLPMTPAILTL).

This sequence belongs to the complex I subunit 2 family.

The protein resides in the mitochondrion inner membrane. It carries out the reaction a ubiquinone + NADH + 5 H(+)(in) = a ubiquinol + NAD(+) + 4 H(+)(out). In terms of biological role, core subunit of the mitochondrial membrane respiratory chain NADH dehydrogenase (Complex I) that is believed to belong to the minimal assembly required for catalysis. Complex I functions in the transfer of electrons from NADH to the respiratory chain. The immediate electron acceptor for the enzyme is believed to be ubiquinone. The chain is NADH-ubiquinone oxidoreductase chain 2 (MT-ND2) from Carassius auratus (Goldfish).